We begin with the raw amino-acid sequence, 394 residues long: Quinolinate synthase (394 aa).

Residues His-67 and Ser-84 each contribute to the iminosuccinate site. Residue Cys-131 participates in [4Fe-4S] cluster binding. Residues 163 to 165 (YMN) and Ser-184 each bind iminosuccinate. Cys-254 is a binding site for [4Fe-4S] cluster. Iminosuccinate is bound by residues 280-282 (HPE) and Thr-297. Cys-346 lines the [4Fe-4S] cluster pocket.

This sequence belongs to the quinolinate synthase family. Type 3 subfamily. The cofactor is [4Fe-4S] cluster.

The protein resides in the cytoplasm. The enzyme catalyses iminosuccinate + dihydroxyacetone phosphate = quinolinate + phosphate + 2 H2O + H(+). It functions in the pathway cofactor biosynthesis; NAD(+) biosynthesis; quinolinate from iminoaspartate: step 1/1. In terms of biological role, catalyzes the condensation of iminoaspartate with dihydroxyacetone phosphate to form quinolinate. This Streptomyces coelicolor (strain ATCC BAA-471 / A3(2) / M145) protein is Quinolinate synthase.